A 369-amino-acid polypeptide reads, in one-letter code: UPF0754 membrane protein Aflv_2299 (369 aa).

A run of 2 helical transmembrane segments spans residues 1-21 (MGLF…GGMT) and 347-367 (YLGA…TFFV).

Belongs to the UPF0754 family.

The protein localises to the cell membrane. This chain is UPF0754 membrane protein Aflv_2299, found in Anoxybacillus flavithermus (strain DSM 21510 / WK1).